The primary structure comprises 794 residues: Signal transducer and activator of transcription 5A (794 aa).

Tyr90 carries the post-translational modification Phosphotyrosine. A Phosphoserine modification is found at Ser128. Residues Trp589–Val686 enclose the SH2 domain. Tyr682 is modified (phosphotyrosine). A Phosphotyrosine; by JAK2 modification is found at Tyr694. A disordered region spans residues Pro771 to Ser794.

It belongs to the transcription factor STAT family. Forms a homodimer or a heterodimer with a related family member. Binds NR3C1. Interacts with NCOA1 and SOCS7. Interacts with ERBB4. Interacts with EBF4. Interacts with CD69. Post-translationally, ISGylated. Tyrosine phosphorylated in response to KITLG/SCF, IL2, IL3, IL7, IL15, CSF2/GMCSF, GH1, PRL, EPO and THPO. Activated KIT promotes phosphorylation on tyrosine residues and subsequent translocation to the nucleus. Tyrosine phosphorylated in response to constitutively activated FGFR1, FGFR2, FGFR3 and FGFR4. Tyrosine phosphorylation is required for DNA-binding activity and dimerization. Serine phosphorylation is also required for maximal transcriptional activity. Tyrosine phosphorylated in response to signaling via activated FLT3; wild-type FLT3 results in much weaker phosphorylation than constitutively activated mutant FLT3. Alternatively, can be phosphorylated by JAK2 at Tyr-694.

The protein resides in the cytoplasm. It localises to the nucleus. In terms of biological role, carries out a dual function: signal transduction and activation of transcription. Mediates cellular responses to the cytokine KITLG/SCF and other growth factors. May mediate cellular responses to activated FGFR1, FGFR2, FGFR3 and FGFR4. Binds to the GAS element and activates PRL-induced transcription. Regulates the expression of milk proteins during lactation. The sequence is that of Signal transducer and activator of transcription 5A (STAT5A) from Bos taurus (Bovine).